We begin with the raw amino-acid sequence, 172 residues long: RNA silencing suppressor p19 (172 aa).

Basic and acidic residues predominate over residues 1–20; that stretch reads MERAIQGNDAREQANSERWD. The segment at 1 to 38 is disordered; sequence MERAIQGNDAREQANSERWDGGSGSSTSPFQLPDESPS.

The protein belongs to the tombusvirus protein p19 family. In terms of assembly, homodimer.

In terms of biological role, viral suppressor of RNA silencing which binds specifically to silencing RNAs (siRNAs). Acts as a molecular caliper to specifically select siRNAs based on the length of the duplex region of the RNA. The polypeptide is RNA silencing suppressor p19 (Tomato bushy stunt virus (strain type) (TBSV)).